The chain runs to 841 residues: GRIP1-associated protein 1 (841 aa).

Residue Ala-2 is modified to N-acetylalanine. 2 coiled-coil regions span residues 4 to 161 (ALSE…YGKE) and 208 to 641 (EQLQ…NSKS). Disordered stretches follow at residues 532–551 (AEES…KQCR) and 558–580 (LKGK…EERD). Ser-655, Ser-666, Ser-668, Ser-669, Ser-688, Ser-690, Ser-691, and Ser-692 each carry phosphoserine. A disordered region spans residues 681–706 (SSAVPARSLSSSPQAQPPRPAELSDE). Residues 682-694 (SAVPARSLSSSPQ) are compositionally biased toward low complexity. Coiled coils occupy residues 701–735 (AELS…LEVS) and 785–814 (DENL…KDME).

As to quaternary structure, interacts with GRIP1, GRIP2 and AMPA receptors. Interacts (via C-terminus) with MAPK8/JNK1 and MAP3K1/MEKK1; the interaction promotes MAP3K1-mediated phosphorylation of MAPK8. Interacts (via N-terminus) with RAB4A (in GTP-bound form). Interacts (via C-terminus) with STX12. Proteolytically cleaved by caspase-3. A minor C-terminal proteolytic fragment of 30 kDa is produced. Proteolytic cleavage is required for JNK signaling activation.

Its subcellular location is the early endosome membrane. The protein localises to the recycling endosome membrane. It localises to the cell projection. It is found in the axon. The protein resides in the dendrite. Its subcellular location is the synapse. Its function is as follows. Regulates the endosomal recycling back to the neuronal plasma membrane, possibly by connecting early and late recycling endosomal domains and promoting segregation of recycling endosomes from early endosomal membranes. Involved in the localization of recycling endosomes to dendritic spines, thereby playing a role in the maintenance of dendritic spine morphology. Required for the activity-induced AMPA receptor recycling to dendrite membranes and for long-term potentiation and synaptic plasticity. In terms of biological role, functions as a scaffold protein to facilitate MAP3K1/MEKK1-mediated activation of the JNK1 kinase by phosphorylation, possibly by bringing MAP3K1/MEKK1 and JNK1 in close proximity. The chain is GRIP1-associated protein 1 from Homo sapiens (Human).